The sequence spans 241 residues: Putative lipoprotein YvcA (241 aa).

The signal sequence occupies residues M1–G18. The N-palmitoyl cysteine moiety is linked to residue C19. A lipid anchor (S-diacylglycerol cysteine) is attached at C19. Residues N22–P48 are disordered. The span at D23–D46 shows a compositional bias: basic and acidic residues.

Its subcellular location is the cell membrane. Required for complex colony architecture. The polypeptide is Putative lipoprotein YvcA (yvcA) (Bacillus subtilis (strain 168)).